Consider the following 506-residue polypeptide: Adenylosuccinate synthetase (506 aa).

Residues 35-41 (GDEGKGK) and 63-65 (GHT) contribute to the GTP site. The Proton acceptor role is filled by aspartate 36. 2 residues coordinate Mg(2+): aspartate 36 and glycine 63. IMP-binding positions include 36 to 39 (DEGK), 61 to 64 (NAGH), threonine 212, arginine 226, asparagine 304, threonine 319, and arginine 383. The active-site Proton donor is the histidine 64. Residue 379 to 385 (VTTKRKR) participates in substrate binding. Residues arginine 385, 411–413 (KLD), and 494–496 (GVG) each bind GTP.

The protein belongs to the adenylosuccinate synthetase family. In terms of assembly, homodimer. The cofactor is Mg(2+).

It is found in the cytoplasm. The enzyme catalyses IMP + L-aspartate + GTP = N(6)-(1,2-dicarboxyethyl)-AMP + GDP + phosphate + 2 H(+). The protein operates within purine metabolism; AMP biosynthesis via de novo pathway; AMP from IMP: step 1/2. In terms of biological role, plays an important role in the de novo pathway and in the salvage pathway of purine nucleotide biosynthesis. Catalyzes the first committed step in the biosynthesis of AMP from IMP. This is Adenylosuccinate synthetase from Drosophila yakuba (Fruit fly).